A 136-amino-acid chain; its full sequence is MVCLFLGASSFIWSLAPAAAAFQLPRCQLLNQTISLEKRGCSGCHRVETTICSGYCATKDPNYKTSYNKAIQHVCTYGDLYYKTFEFPECVPGVDPVVTYPVALSCRCGGCAMATSDCTFESLQPDFCMNDIPFYH.

The first 21 residues, 1–21 (MVCLFLGASSFIWSLAPAAAA), serve as a signal peptide directing secretion. Cystine bridges form between Cys-27–Cys-75, Cys-41–Cys-90, Cys-44–Cys-128, Cys-52–Cys-106, Cys-56–Cys-108, and Cys-111–Cys-118. A glycan (N-linked (GlcNAc...) asparagine) is linked at Asn-31.

This sequence belongs to the glycoprotein hormones subunit beta family. As to quaternary structure, heterodimer of an alpha and a beta chain.

Its subcellular location is the secreted. Its function is as follows. Involved in gametogenesis and steroidogenesis. This is Gonadotropin subunit beta-2 (cgbb) from Fundulus heteroclitus (Killifish).